A 326-amino-acid chain; its full sequence is Cytosolic sulfotransferase 7 (326 aa).

Residue 72–77 (KSGTTW) participates in 3'-phosphoadenylyl sulfate binding. Catalysis depends on His-138, which acts as the Proton acceptor. 3'-phosphoadenylyl sulfate-binding positions include Arg-160, Ser-168, Tyr-226, and 292 to 294 (RKG).

This sequence belongs to the sulfotransferase 1 family.

It is found in the cytoplasm. Functionally, sulfotransferase that utilizes 3'-phospho-5'-adenylyl sulfate (PAPS) as sulfonate donor. This Arabidopsis thaliana (Mouse-ear cress) protein is Cytosolic sulfotransferase 7 (SOT7).